Here is a 187-residue protein sequence, read N- to C-terminus: Tumor necrosis factor ligand superfamily member 4 (187 aa).

The Cytoplasmic portion of the chain corresponds to 1–23; it reads MEGVRPLEENVGNAPRPRFERNK. Residues 24 to 44 traverse the membrane as a helical; Signal-anchor for type II membrane protein segment; the sequence is LLLVASVVQALGLLLCLTYVC. The Extracellular portion of the chain corresponds to 45–187; the sequence is QHSHAPEVSL…LQNPGGYCAP (143 aa). One can recognise a THD domain in the interval 58–177; the sequence is PIENIMTQLQ…SVNAGELIVI (120 aa). 2 disulfides stabilise this stretch: cysteine 74/cysteine 164 and cysteine 101/cysteine 185. Residues asparagine 94 and asparagine 156 are each glycosylated (N-linked (GlcNAc...) asparagine).

The protein belongs to the tumor necrosis factor family. In terms of assembly, homotrimer.

Its subcellular location is the membrane. Functionally, cytokine that binds to TNFRSF4. Co-stimulates T-cell proliferation and cytokine production. The polypeptide is Tumor necrosis factor ligand superfamily member 4 (TNFSF4) (Oryctolagus cuniculus (Rabbit)).